A 185-amino-acid polypeptide reads, in one-letter code: CASP-like protein 2C2 (185 aa).

The Cytoplasmic segment spans residues 1 to 22; sequence MAAAARVSEVKAEGLLRGACTA. A helical transmembrane segment spans residues 23–43; it reads LAAAAALLVGLSTQTETVLLV. At 44-53 the chain is on the extracellular side; it reads RKKATVKDVQ. The chain crosses the membrane as a helical span at residues 54–74; the sequence is ALWVLAMAAAAAAGYHLLQLL. Topologically, residues 75–104 are cytoplasmic; that stretch reads KCLYLGRVGGARPCRRSSRALAWTCLLLDK. The helical transmembrane segment at 105–125 threads the bilayer; that stretch reads ACAYTTFATTVAAAQACVVAL. Over 126–146 the chain is Extracellular; the sequence is DGAHALQWTKLCNIYTRFCEQ. A helical transmembrane segment spans residues 147 to 167; it reads VAGSLVLGMLAAVGTAVLSAA. Residues 168–185 lie on the Cytoplasmic side of the membrane; that stretch reads SARNVFRHYASLETYAAH.

Belongs to the Casparian strip membrane proteins (CASP) family. As to quaternary structure, homodimer and heterodimers.

The protein localises to the cell membrane. This is CASP-like protein 2C2 from Zea mays (Maize).